The following is a 199-amino-acid chain: MKFSPLLDELIQSLRCLPGVGPKSAQRMAFQLLERDRKAGLKLASALSSAMSDIGHCQSCRTYTEESLCPICSSHKRGSSSTICVVETPADVLAIEAGGHFTGRYFVLLGHLSPLDGVGPEELGLALLERHLASGDVAELILATNPTVEGEATAHFIADMARRHKVVISRIAHGVPVGGELEYVDSTTLALSFNGRIPL.

The C4-type zinc-finger motif lies at 57 to 72 (CQSCRTYTEESLCPIC). The region spanning 81-176 (STICVVETPA…VISRIAHGVP (96 aa)) is the Toprim domain.

It belongs to the RecR family.

May play a role in DNA repair. It seems to be involved in an RecBC-independent recombinational process of DNA repair. It may act with RecF and RecO. The sequence is that of Recombination protein RecR from Shewanella sp. (strain ANA-3).